Here is an 897-residue protein sequence, read N- to C-terminus: Zinc finger protein zas1 (897 aa).

2 C2H2-type zinc fingers span residues 26–50 (FYCTYPDCPKSFTRKEHLRRHERTH) and 56–79 (FSCSFCNRAFARSDVLNRHVQQMH). The C2H2-type 3; atypical zinc-finger motif lies at 93 to 119 (ASCFLGFCVLAHDYVNLINARHFMIEH).

Its subcellular location is the nucleus. The chain is Zinc finger protein zas1 (zas1) from Schizosaccharomyces pombe (strain 972 / ATCC 24843) (Fission yeast).